A 451-amino-acid polypeptide reads, in one-letter code: UPF0210 protein LMHCC_2097 (451 aa).

This sequence belongs to the UPF0210 family. Homodimer.

In Listeria monocytogenes serotype 4a (strain HCC23), this protein is UPF0210 protein LMHCC_2097.